We begin with the raw amino-acid sequence, 407 residues long: Odorant receptor 67a (407 aa).

Over 1 to 40 the chain is Cytoplasmic; it reads MDNVAEMPEEKYVEVDDFLRLAVKFYNTLGIDPYETGRKR. Residues 41 to 61 form a helical membrane-spanning segment; the sequence is TIWFQIYFALNMFNMVFSFYA. Residues 62–79 are Extracellular-facing; that stretch reads EVATLVDRLRDNENFLES. Residues 80 to 100 form a helical membrane-spanning segment; it reads CILLSYVSFVVMGLSKIGAVM. At 101–144 the chain is on the cytoplasmic side; it reads KKKPKMTALVRQLETCFPSPSAKVQEEYAVKSWLKRCHIYTKGF. A helical membrane pass occupies residues 145-165; sequence GGLFMIMYFAHALIPLFIYFI. The Extracellular segment spans residues 166–208; it reads QRVLLHYPDAKQIMPFYQLEPWEFRDSWLFYPSYFHQSSAGYT. Residues 209–229 traverse the membrane as a helical segment; sequence ATCGSIAGDLMIFAVVLQVIM. The Cytoplasmic segment spans residues 230-278; the sequence is HYERLAKVLREFKIQAHNAPNGAKEDIRKLQSLVANHIDILRLTDLMNE. The chain crosses the membrane as a helical span at residues 279 to 300; the sequence is VFGIPLLLNFIASALLVCLVGV. Topologically, residues 301–314 are extracellular; that stretch reads QLTIALSPEYFCKQ. Residues 315 to 331 form a helical membrane-spanning segment; that stretch reads MLFLISVLLEVYLLCSF. Residues 332-378 are Cytoplasmic-facing; the sequence is SQRLIDASENVGHAAYDMDWLGSDKRFKKILIFISMRSQKPVCLKAT. The chain crosses the membrane as a helical span at residues 379–401; that stretch reads VVLDLSMPTMSIFLGMSYKFFCA. The Extracellular portion of the chain corresponds to 402–407; the sequence is VRTMYQ.

It belongs to the insect chemoreceptor superfamily. Heteromeric odorant receptor channel (TC 1.A.69) family. Or49a subfamily. As to quaternary structure, interacts with Orco. Complexes exist early in the endomembrane system in olfactory sensory neurons (OSNs), coupling these complexes to the conserved ciliary trafficking pathway. In terms of tissue distribution, expressed in olfactory sensory neurons in the antenna.

Its subcellular location is the cell membrane. Its function is as follows. Odorant receptor which mediates acceptance or avoidance behavior, depending on its substrates. The odorant receptor repertoire encodes a large collection of odor stimuli that vary widely in identity, intensity, and duration. Forms a complex with Orco to form odorant-sensing units, providing sensitive and prolonged odorant signaling and calcium permeability. Involved in the behavioral responses to benzaldehyde and acetophenone. This chain is Odorant receptor 67a (Or67a), found in Drosophila melanogaster (Fruit fly).